Consider the following 1123-residue polypeptide: Phytochrome 1 (1123 aa).

A compositionally biased stretch (low complexity) spans 1-15; it reads MSTPKKTYSSTSSAK. The interval 1–20 is disordered; it reads MSTPKKTYSSTSSAKSKAHS. The region spanning 216–395 is the GAF domain; it reads DIGLLCDTVV…VFGLQLNMEV (180 aa). C321 contacts phytochromobilin. PAS domains follow at residues 610–681 and 744–815; these read VANE…LRGE and DYKT…TKFM. The Histidine kinase domain maps to 895–1115; sequence YIRQEIKNPL…VVNVELPMAQ (221 aa).

It belongs to the phytochrome family. As to quaternary structure, homodimer. Contains one covalently linked phytochromobilin chromophore.

Its subcellular location is the cytoplasm. Functionally, regulatory photoreceptor which exists in two forms that are reversibly interconvertible by light: the Pr form that absorbs maximally in the red region of the spectrum and the Pfr form that absorbs maximally in the far-red region. Photoconversion of Pr to Pfr induces an array of morphogenetic responses, whereas reconversion of Pfr to Pr cancels the induction of those responses. Pfr controls the expression of a number of nuclear genes including those encoding the small subunit of ribulose-bisphosphate carboxylase, chlorophyll A/B binding protein, protochlorophyllide reductase, rRNA, etc. It also controls the expression of its own gene(s) in a negative feedback fashion. Mediates chloroplast avoidance movement in cytoplasm. The sequence is that of Phytochrome 1 (PHY1) from Physcomitrium patens (Spreading-leaved earth moss).